A 179-amino-acid polypeptide reads, in one-letter code: Large ribosomal subunit protein uL5 (179 aa).

This sequence belongs to the universal ribosomal protein uL5 family. Part of the 50S ribosomal subunit; part of the 5S rRNA/L5/L18/L25 subcomplex. Contacts the 5S rRNA and the P site tRNA. Forms a bridge to the 30S subunit in the 70S ribosome.

In terms of biological role, this is one of the proteins that bind and probably mediate the attachment of the 5S RNA into the large ribosomal subunit, where it forms part of the central protuberance. In the 70S ribosome it contacts protein S13 of the 30S subunit (bridge B1b), connecting the 2 subunits; this bridge is implicated in subunit movement. Contacts the P site tRNA; the 5S rRNA and some of its associated proteins might help stabilize positioning of ribosome-bound tRNAs. This chain is Large ribosomal subunit protein uL5, found in Halorhodospira halophila (strain DSM 244 / SL1) (Ectothiorhodospira halophila (strain DSM 244 / SL1)).